We begin with the raw amino-acid sequence, 420 residues long: Transcription factor TCP4 (420 aa).

The interval 1–27 is disordered; it reads MSDDQFHHPPPPSSMRHRSTSDAADGG. In terms of domain architecture, TCP spans 45 to 103; that stretch reads RKDRHSKVCTAKGPRDRRVRLSAHTAIQFYDVQDRLGFDRPSKAVDWLIKKAKTSIDEL. Disordered regions lie at residues 121–176, 228–256, 353–379, and 399–420; these read NAKP…PSMD, LSLQ…ASEP, HQSI…IPGI, and QEEE…ISRH. The span at 410 to 420 shows a compositional bias: polar residues; it reads KPSSASSISRH.

As to quaternary structure, interacts with AHL27 and AHL29. Interacts with SPL. Interacts with JGB. Interacts with GI (via N-terminus). In terms of tissue distribution, expressed in cotyledons, particularly in the vascular region, in leaves, roots, buds, flowers and immature siliques.

It is found in the nucleus. Its function is as follows. Transcription factor playing a pivotal role in the control of morphogenesis of shoot organs by negatively regulating the expression of boundary-specific genes such as CUC genes, probably through the induction of miRNA (e.g. miR164). Required during early steps of embryogenesis. Participates in ovule development. Activates LOX2 expression by binding to the 5'-GGACCA-3' motif found in its promoter. Activates YUC5 transcription by binding to the 5'-GTGGGCCA-3' motif found in its promoter. Through the activation of YUC5 transcription, integrates the auxin response to a brassinosteroid-dependent molecular circuit that promotes cell elongation in hypocotyls. Activates GIS transcription by binding to the 5'-TGGTCC-3' motif found in its promoter. Involved in the regulation of trichome branching through the activation of GIS transcription. Activates CO transcription by binding to the 5'-GGACCAC-3' motif found in its promoter. Involved in the regulation of photoperiodic flowering through the activation of CO transcription. Activates TCL1 and TCL2 transcription by binding to the 5'-TGGCCA-3' and 5'-GTGGACCA-3' motifS found in their respective promoters. Involved in the suppression of trichome initiaition through the activation of TCL1 and TCL2 transcription. Activates HAT2 transcription by binding to the 5'-TGGTCCAC-3' motif found in its promoter. Through the activation of HAT2 transcription, involved in the auxin-independent reprogramming of mitotic cells to exit division and acquire differentiation competence within the transition zone. The polypeptide is Transcription factor TCP4 (TCP4) (Arabidopsis thaliana (Mouse-ear cress)).